Here is a 209-residue protein sequence, read N- to C-terminus: Kynurenine formamidase (209 aa).

A substrate-binding site is contributed by Trp-20. Zn(2+) contacts are provided by His-50, His-54, and Asp-56. The active-site Proton donor/acceptor is His-60. Zn(2+)-binding residues include His-161 and Glu-173.

The protein belongs to the Cyclase 1 superfamily. KynB family. As to quaternary structure, homodimer. Zn(2+) is required as a cofactor.

The catalysed reaction is N-formyl-L-kynurenine + H2O = L-kynurenine + formate + H(+). Its pathway is amino-acid degradation; L-tryptophan degradation via kynurenine pathway; L-kynurenine from L-tryptophan: step 2/2. Its function is as follows. Catalyzes the hydrolysis of N-formyl-L-kynurenine to L-kynurenine, the second step in the kynurenine pathway of tryptophan degradation. This is Kynurenine formamidase from Bacillus thuringiensis (strain Al Hakam).